The sequence spans 639 residues: UvrABC system protein C (639 aa).

Residues 31–109 (EQAGVYRMYD…IKKYQPKYNI (79 aa)) form the GIY-YIG domain. The UVR domain occupies 218-253 (SAVIEQLVARMELASNELHFELAAKYRDQIVTLRKV).

Belongs to the UvrC family. In terms of assembly, interacts with UvrB in an incision complex.

The protein resides in the cytoplasm. In terms of biological role, the UvrABC repair system catalyzes the recognition and processing of DNA lesions. UvrC both incises the 5' and 3' sides of the lesion. The N-terminal half is responsible for the 3' incision and the C-terminal half is responsible for the 5' incision. The sequence is that of UvrABC system protein C from Colwellia psychrerythraea (strain 34H / ATCC BAA-681) (Vibrio psychroerythus).